A 399-amino-acid chain; its full sequence is MCGVGKVYLDRTEERMYDGEFGETVQQSMEILVALGDIYGAERMVDISSAQVSGVSYKTIGDAGLEYLEDLRARGAGVKVASTLNPAGMDLQRWREMGFSEEFARRQIRIVEAYSAMDVMNTCTCTPYLIGNVPLRGSHVAWSESSAVSYANSVLGARTNREGGPGALAAAICGKTPEYGYHLQENRRATLRVDVECELSGSDYGALGYITGKIAGEGVPYFTFTGHPSADDLKALGAAMASSGAVALYHVDGVTPEYMEASPDEAGDSITVDAGDILEAREELSTTDDDPDLICLGCPHCSLDEIRRIASFLRKNKPACDLWVCTSAAIGSAASRMGYTDVIEAAGGMVVSDTCMVVAPVEDLGYEVLGVDSAKAANYVPGMCGLDAVYDDWMNLIRP.

(R)-5-phosphomevalonate contacts are provided by G54, V55, S56, N85, and P86. C125 is a [4Fe-4S] cluster binding site. (R)-5-phosphomevalonate is bound by residues E144 and S145. Positions 298 and 355 each coordinate [4Fe-4S] cluster. K375 lines the (R)-5-phosphomevalonate pocket.

This sequence belongs to the AcnX type II large subunit family. In terms of assembly, heterodimer composed of a large subunit (PMDh-L) and a small subunit (PMDh-S). Requires [4Fe-4S] cluster as cofactor.

The enzyme catalyses (R)-5-phosphomevalonate = (2E)-3-methyl-5-phosphooxypent-2-enoate + H2O. Its pathway is isoprenoid biosynthesis; isopentenyl diphosphate biosynthesis via mevalonate pathway. Its function is as follows. Component of a hydro-lyase that catalyzes the dehydration of mevalonate 5-phosphate (MVA5P) to form trans-anhydromevalonate 5-phosphate (tAHMP). Involved in the archaeal mevalonate (MVA) pathway, which provides fundamental precursors for isoprenoid biosynthesis, such as isopentenyl diphosphate (IPP) and dimethylallyl diphosphate (DMAPP). This is Phosphomevalonate dehydratase large subunit from Methanothermobacter thermautotrophicus (strain ATCC 29096 / DSM 1053 / JCM 10044 / NBRC 100330 / Delta H) (Methanobacterium thermoautotrophicum).